The primary structure comprises 212 residues: uncharacterized protein (212 aa).

3 residues coordinate S-adenosyl-L-methionine: Gly-53, Glu-74, and Asp-97.

It belongs to the methyltransferase superfamily. YrrT family.

Could be a S-adenosyl-L-methionine-dependent methyltransferase. This is an uncharacterized protein from Bacillus cereus (strain ZK / E33L).